We begin with the raw amino-acid sequence, 769 residues long: Serine protease HtrA-like (769 aa).

The span at 1 to 20 (MDIGKKHVIPKSQYRRKRRE) shows a compositional bias: basic residues. The interval 1–388 (MDIGKKHVIP…KKATSKLNKG (388 aa)) is disordered. Composition is skewed to basic and acidic residues over residues 21–64 (FFHN…ERFK), 71–87 (LEQR…EESK), and 96–108 (YNKD…DVSK). A compositionally biased stretch (polar residues) spans 126–139 (YEQNTEATLSTNST). A compositionally biased stretch (basic and acidic residues) spans 140–186 (DKVESTDMRKLSSDKNKVGHEEQHVLSKPSEHDKETRIDFESSRTDS). A compositionally biased stretch (polar residues) spans 247–262 (QQSQNEQTKTYTYGDS). Composition is skewed to basic and acidic residues over residues 264–296 (QNDK…HIVD) and 310–330 (KIDD…HKQN). Positions 331–347 (ADSSETVGYQSQSSASH) are enriched in polar residues. A compositionally biased stretch (basic and acidic residues) spans 348–364 (RSTEKRNMAINDHDKLN). Polar residues predominate over residues 366–388 (QKPNTKTSANNNQKKATSKLNKG). Residues 410–430 (LVILMGIIILIVILNAIFNNV) traverse the membrane as a helical segment. Residues His-504, Asp-534, and Ser-619 each act as charge relay system in the active site. Residues 680-733 (IASLNSFERQAVKLLGKVKNGVVVDQVDNNGLADQSGLKKGDVITELDGKLLED) enclose the PDZ domain.

The protein belongs to the peptidase S1C family.

It is found in the cell membrane. This Staphylococcus aureus (strain MRSA252) protein is Serine protease HtrA-like.